A 217-amino-acid polypeptide reads, in one-letter code: Twisted gastrulation protein homolog 1-A (217 aa).

The N-terminal stretch at 1-26 (MRPALFLCPVLISVLFLLSSLSLISG) is a signal peptide. N-linked (GlcNAc...) asparagine glycosylation is found at N53 and N147.

The protein belongs to the twisted gastrulation protein family.

The protein resides in the secreted. Functionally, involved in dorsal-ventral patterning. Appears to function predominantly as a ventralizing factor, through its actions as a BMP signaling agonist, acting through both chd-dependent and chd-independent mechanisms. May also antagonize BMP signaling, probably via formation of ternary complexes with chd and BMPs, resulting in dorsalization. The chain is Twisted gastrulation protein homolog 1-A (twsg1a) from Danio rerio (Zebrafish).